The following is a 198-amino-acid chain: MFLVVGLGNPGIEYQFTPHNAGFLAVDAIAAEHNAVVSNRRCQALTGKIQLGGREVILAKPETYMNLSGVAVSALVRELNADPVRDLLVLYDELDLPIGSIRVRERGSPASHNGARSICSALGTADWPRVRIGVGPSGEDDLFRKGKNYLLTPMRKADLATLDGALERTARAVETVVTRGIGVAMNEFNRRENNGPAA.

TRNA is bound at residue Y14. The Proton acceptor role is filled by H19. Positions 64, 66, and 113 each coordinate tRNA.

Belongs to the PTH family. Monomer.

It is found in the cytoplasm. It carries out the reaction an N-acyl-L-alpha-aminoacyl-tRNA + H2O = an N-acyl-L-amino acid + a tRNA + H(+). Its function is as follows. Hydrolyzes ribosome-free peptidyl-tRNAs (with 1 or more amino acids incorporated), which drop off the ribosome during protein synthesis, or as a result of ribosome stalling. Functionally, catalyzes the release of premature peptidyl moieties from peptidyl-tRNA molecules trapped in stalled 50S ribosomal subunits, and thus maintains levels of free tRNAs and 50S ribosomes. The protein is Peptidyl-tRNA hydrolase of Acidobacterium capsulatum (strain ATCC 51196 / DSM 11244 / BCRC 80197 / JCM 7670 / NBRC 15755 / NCIMB 13165 / 161).